A 360-amino-acid chain; its full sequence is Peptide chain release factor 1 (360 aa).

Q235 bears the N5-methylglutamine mark.

This sequence belongs to the prokaryotic/mitochondrial release factor family. Methylated by PrmC. Methylation increases the termination efficiency of RF1.

It localises to the cytoplasm. Its function is as follows. Peptide chain release factor 1 directs the termination of translation in response to the peptide chain termination codons UAG and UAA. The sequence is that of Peptide chain release factor 1 from Burkholderia cenocepacia (strain HI2424).